An 83-amino-acid chain; its full sequence is Small ribosomal subunit protein eS21 (83 aa).

This sequence belongs to the eukaryotic ribosomal protein eS21 family. Component of the 40S small ribosomal subunit.

It localises to the cytoplasm. The protein localises to the cytosol. Its subcellular location is the rough endoplasmic reticulum. In terms of biological role, component of the small ribosomal subunit. The ribosome is a large ribonucleoprotein complex responsible for the synthesis of proteins in the cell. The chain is Small ribosomal subunit protein eS21 (rps21) from Ictalurus punctatus (Channel catfish).